The primary structure comprises 419 residues: Acyl-[acyl-carrier-protein] desaturase 6, chloroplastic (419 aa).

The transit peptide at 1–54 (MAATATMAMPLANRLRCKPNTNSSSPSRTLFGRRVTMISSSRWGSAVSGSAIMS) directs the protein to the chloroplast. 6 residues coordinate Fe cation: E151, E189, H192, E242, E277, and H280.

Belongs to the fatty acid desaturase type 2 family. Homodimer. Requires Fe(2+) as cofactor.

It localises to the plastid. The protein localises to the chloroplast. It functions in the pathway lipid metabolism; fatty acid metabolism. Introduces a cis double bond in the acyl chain of an acyl-[acyl-carrier protein]. The protein is Acyl-[acyl-carrier-protein] desaturase 6, chloroplastic of Oryza sativa subsp. japonica (Rice).